The primary structure comprises 2559 residues: MTATTRGSPVGGNDNQGQAPDGQSQPPLQQNQTSSPDSSNENSPATPPDEQGQGDAPPQIEDEEPAFPHTDLAKLDDMINRPRWVVPVLPKGELEVLLEAAIDLSKKGLDVKSEACQRFFRDGLTISFTKILTDEAVSGWKFEIHRCIINNTHRLVELCVAKLAQDWFPLLELLAMALNPHCKFHIYNGTRPCESVSSSVQLPEDELFARSPDPRSPKGWLVDLLNKFGTLNGFQILHDRFINGSALNVQIIAALIKPFGQCYEFLTLHTVKKYFLPIIEMVPQFLENLTDEELKKEAKNEAKNDALSMIIKSLKNLASRVPGQEETVKNLEIFRLKMILRLLQISSFNGKMNALNEVNKVISSVSYYTHRHGSSEDEEWLTAERMAEWIQQNNILSIVLRDSLHQPQYVEKLEKILRFVIKEKALTLQDLDNIWAAQAGKHEAIVKNVHDLLAKLAWDFSPEQLDHLFDCFKASWTNASKKQREKLLELIRRLAEDDKDGVMAHKVLNLLWNLAHSDDVPVDIMDLALSAHIKILDYSCSQDRDTQKIQWIDRFIEELRTNDKWVIPALKQIREICSLFGEAPQNLSQSQRSPHVFYRHDLINQLQHNHALVTLVAENLATYMESMRMYGRDNEDYDPQTVRLGSRYSHVQEVQERLNFLRFLLKDGQLWLCAPQAKQIWKCLAENAVYLCDREACFKWYSKLMGDEPDLDPDINKDFFESNVLQLDPSLLTENGMKCFERFFKAVNCREGKLVAKRRAYMMDDLELIGLDYLWRVVIQSNDDIACRAIDLLKEIYTNLGPRLQVNQVVIHEDFIQSCFDRLKASYDTLCVLDGDKDSINCARQEAVRMVRVLTVLREYINECDSDYHEERTILPMSRAFRGKHLSFIVRFPNQGRQVDDLEVWSHTNDTIGSVRRCILNRIKANVAHTKIELFVGGELIDPGDDRKLIGQLNLKDKSLITAKLTQISSNMPSSPDSSSDSSTGSPGNHGNHYSDGPNPEVESCLPGVIMSLHPRYISFLWQVADLGSSLNMPPLRDGARVLMKLMPPDSTTIEKLRAICLDHAKLGESSLSPSLDSLFFGPSASQVLYLTEVVYALLMPAGAPLTDDSSDFQFHFLKSGGLPLVLSMLTRNNFLPNADMETRRGAYLNALKIAKLLLTAIGYGHVRAVAEACQPGVEGVNPMTSVNQVTHDQAVVLQSALQSIPNPSSECMLRNVSVRLAQQISDEASRYMPDICVIRAIQKIIWTSGCGGLQLVFSPNEEVTKIYEKTNAGNEPDLEDEQVCCEALEVMTLCFALIPTALDALSKEKAWQTFIIDLLLHCHSKTVRQVAQEQFFLMCTRCCMGHRPLLFFITLLFTVLGSTARERAKHSGDYFTLLRHLLNYAYNSNINVPNAEVLLNNEIDWLKRIRDDVKRTGETGVEETILEGHLGVTKELLAFQTPEKKFHIGCEKGGANLIKELIDDFIFPASNVYLQYMRNGELPAEQAIPVCGSPATINAGFELLVALAVGCVRNLKQIVDSLTEMYYIGTAITTCEALTEWEYLPPVGPRPPKGFVGLKNAGATCYMNSVIQQLYMIPSIRNGILAIEGTGSDVDDDMSGDEKQDNESNVDPRDDVFGYPQQFEDKPPLSKTEDRKEYNIGVLRHLQVIFGHLAASRLQYYVPRGFWKQFRLWGEPVNLREQHDALEFFNSLVDSLDEALKALGHPAMLSKVLGGSFADQKICQGCPHRYECEESFTTLNVDIRNHQNLLDSLEQYVKGDLLEGANAYHCEKCNKKVDTVKRLLIKKLPPVLAIQLKRFDYDWERECAIKFNDYFEFPRELDMEPYTVAGVAKLEGDNVNPESQLIQQNEQSESEKAGSTKYRLVGVLVHSGQASGGHYYSYIIQRNGGDGEKNRWYKFDDGDVTECKMDDDEEMKNQCFGGEYMGEVFDHMMKRMSYRRQKRWWNAYILFYERMDTIGHDDEVIRYISEIAITTRPHQIVMPSAIERSVRKQNVQFMHNRMQYSLEYFQFMKKLLTCNGVYLNPPPGQDHLSPEAEEITMISIQLAARFLFTTGFHTKKIVRGSASDWYDALCILLRHSKNVRFWFAHNVLFNVSNRFSEYLLECPSAEVRGAFAKLIVFIAHFSLQDGPCPSPFASPGPSSQAYDNLSLSDHLLRAVLNLLRREVSEHGRHLQQYFNLFVMYANLGVAEKTQLLKLSVPATFMLVSLDEGPGPPIKYQYAELGKLYSVVSQLIRCCNVSSRMQSSINGNPSLPNPFGDPNLSQPIMPIQQNVVDILFVRTSYVKKIIEDCSNSDETVKLLRFCCWENPQFSSTVLSELLWQVAYSYTYELRPYLDLLLQILLIEDSWQTHRIHNALKGIPDDRDGLFDTIQRSKNHYQKRAYQCIKCMVALFSSCPVAYQILQGNGDLKRKWTWAVEWLGDELERRPYTGNPQYTYNNWSPPVQSNETSNGYFLERSHSARMTLAKACELCPEEEPDDQDAPDEHESPPPEDAPLYPHSPGSQYQQNNHVHGQPYTGPAAHHMNNPQRTGQRAQENYEGGEEVSPPQTKGSVKCTY.

The segment covering 1 to 44 (MTATTRGSPVGGNDNQGQAPDGQSQPPLQQNQTSSPDSSNENSP) has biased composition (polar residues). The interval 1–64 (MTATTRGSPV…DAPPQIEDEE (64 aa)) is disordered. A phosphoserine mark is found at Ser374, Ser375, and Ser588. The disordered stretch occupies residues 967 to 999 (QISSNMPSSPDSSSDSSTGSPGNHGNHYSDGPN). The span at 969–989 (SSNMPSSPDSSSDSSTGSPGN) shows a compositional bias: low complexity. The 400-residue stretch at 1557 to 1956 (VGLKNAGATC…NAYILFYERM (400 aa)) folds into the USP domain. Residue Cys1566 is the Nucleophile of the active site. The segment at 1592–1633 (GSDVDDDMSGDEKQDNESNVDPRDDVFGYPQQFEDKPPLSKT) is disordered. A Phosphoserine modification is found at Ser1600. 2 stretches are compositionally biased toward basic and acidic residues: residues 1601–1617 (GDEKQDNESNVDPRDDV) and 1624–1633 (FEDKPPLSKT). Cys1727, His1729, Cys1771, and Cys1774 together coordinate Zn(2+). His1879 acts as the Proton acceptor in catalysis. Ser2443 is subject to Phosphoserine. Acidic residues predominate over residues 2475–2484 (PEEEPDDQDA). The tract at residues 2475–2559 (PEEEPDDQDA…QTKGSVKCTY (85 aa)) is disordered. Polar residues-rich tracts occupy residues 2503 to 2513 (PGSQYQQNNHV) and 2527 to 2537 (NNPQRTGQRAQ). Tyr2540 is subject to Phosphotyrosine. Ser2547 carries the post-translational modification Phosphoserine. Thr2551 bears the Phosphothreonine mark.

This sequence belongs to the peptidase C19 family. Interacts with SMAD4, MARK4, NUAK1 and BIRC5/survivin. Interacts with DCX. Interacts with OTUD4 and USP7; the interaction is direct. In terms of tissue distribution, highest levels in liver and brain with expression also detected in heart, muscle, spleen and kidney (at protein leve). Ubiquitously expressed in adult tissues.

Its subcellular location is the cytoplasm. It localises to the cytosol. The protein resides in the cell projection. The protein localises to the growth cone. It is found in the cytoskeleton. Its subcellular location is the cilium axoneme. The enzyme catalyses Thiol-dependent hydrolysis of ester, thioester, amide, peptide and isopeptide bonds formed by the C-terminal Gly of ubiquitin (a 76-residue protein attached to proteins as an intracellular targeting signal).. In terms of biological role, deubiquitinase involved both in the processing of ubiquitin precursors and of ubiquitinated proteins. May therefore play an important regulatory role at the level of protein turnover by preventing degradation of proteins through the removal of conjugated ubiquitin. Specifically hydrolyzes 'Lys-11'-, followed by 'Lys-63'-, 'Lys-48'- and 'Lys-6'-linked polyubiquitins chains. Essential component of TGF-beta/BMP signaling cascade. Specifically deubiquitinates monoubiquitinated SMAD4, opposing the activity of E3 ubiquitin-protein ligase TRIM33. Deubiquitinates alkylation repair enzyme ALKBH3. OTUD4 recruits USP7 and USP9X to stabilize ALKBH3, thereby promoting the repair of alkylated DNA lesions. Deubiquitinates RNA demethylase enzyme ALKBH5, promoting its stability. Deubiquitinates mTORC2 complex component RICTOR at 'Lys-294' by removing 'Lys-63'-linked polyubiquitin chains, stabilizing RICTOR and enhancing its binding to MTOR, thus promoting mTORC2 complex assembly. Regulates chromosome alignment and segregation in mitosis by regulating the localization of BIRC5/survivin to mitotic centromeres. Involved in axonal growth and neuronal cell migration. Regulates cellular clock function by enhancing the protein stability and transcriptional activity of the core circadian protein BMAL1 via its deubiquitinating activity. Acts as a regulator of peroxisome import by mediating deubiquitination of PEX5: specifically deubiquitinates PEX5 monoubiquitinated at 'Cys-11' following its retrotranslocation into the cytosol, resetting PEX5 for a subsequent import cycle. Deubiquitinates PEG10. Inhibits the activation of the Hippo signaling pathway via deubiquitination of AMOTL2 at 'Lys-337' and 'Lys-404' which prohibits its interaction with and activation of LATS2. Loss of LATS2 activation and subsequent loss of YAP1 phosphorylation results in an increase in YAP1-driven transcription of target genes. The chain is Ubiquitin carboxyl-terminal hydrolase 9X from Mus musculus (Mouse).